A 413-amino-acid polypeptide reads, in one-letter code: Probable protein S-acyltransferase 3 (413 aa).

The next 2 membrane-spanning stretches (helical) occupy residues Leu65–Ile85 and Val96–Ala116. A DHHC domain is found at Lys171–Ser221. Cys201 acts as the S-palmitoyl cysteine intermediate in catalysis. 2 consecutive transmembrane segments (helical) span residues Phe216–Ile236 and Ser255–Phe275. Residues Arg364–Lys413 form a disordered region. Positions Asn376–Pro402 are enriched in basic and acidic residues. Residues Phe404 to Lys413 show a composition bias toward polar residues.

The protein belongs to the DHHC palmitoyltransferase family. As to expression, expressed in flowers and pollen.

It localises to the endoplasmic reticulum membrane. Its subcellular location is the cytoplasmic vesicle membrane. It carries out the reaction L-cysteinyl-[protein] + hexadecanoyl-CoA = S-hexadecanoyl-L-cysteinyl-[protein] + CoA. Functionally, palmitoyl acyltransferase. The sequence is that of Probable protein S-acyltransferase 3 (PAT03) from Arabidopsis thaliana (Mouse-ear cress).